We begin with the raw amino-acid sequence, 89 residues long: Alpha-latrotoxin associated low molecular weight protein SGV242-280 (89 aa).

The first 18 residues, 1–18 (MSKLHFLILLSVIVSVFC), serve as a signal peptide directing secretion.

Belongs to the arthropod CHH/MIH/GIH/VIH hormone family. Expressed by the venom gland.

The protein resides in the secreted. Functionally, may increase the toxicity of alpha-latrotoxin and/or other venom components. Is non-toxic to mice and to the cockroach Periplaneta americana. In Steatoda grossa (False black widow), this protein is Alpha-latrotoxin associated low molecular weight protein SGV242-280.